Here is a 264-residue protein sequence, read N- to C-terminus: tRNA pseudouridine synthase A (264 aa).

The active-site Nucleophile is the Asp51. Tyr109 provides a ligand contact to substrate.

It belongs to the tRNA pseudouridine synthase TruA family. In terms of assembly, homodimer.

The enzyme catalyses uridine(38/39/40) in tRNA = pseudouridine(38/39/40) in tRNA. In terms of biological role, formation of pseudouridine at positions 38, 39 and 40 in the anticodon stem and loop of transfer RNAs. The polypeptide is tRNA pseudouridine synthase A (Polaromonas sp. (strain JS666 / ATCC BAA-500)).